The sequence spans 329 residues: Beta-ketoacyl-[acyl-carrier-protein] synthase III (329 aa).

Residues C123 and H256 contribute to the active site. The ACP-binding stretch occupies residues 257 to 261 (QANIR). Residue N286 is part of the active site.

The protein belongs to the thiolase-like superfamily. FabH family. As to quaternary structure, homodimer.

Its subcellular location is the cytoplasm. It carries out the reaction malonyl-[ACP] + acetyl-CoA + H(+) = 3-oxobutanoyl-[ACP] + CO2 + CoA. It participates in lipid metabolism; fatty acid biosynthesis. Catalyzes the condensation reaction of fatty acid synthesis by the addition to an acyl acceptor of two carbons from malonyl-ACP. Catalyzes the first condensation reaction which initiates fatty acid synthesis and may therefore play a role in governing the total rate of fatty acid production. Possesses both acetoacetyl-ACP synthase and acetyl transacylase activities. Its substrate specificity determines the biosynthesis of branched-chain and/or straight-chain of fatty acids. This Burkholderia orbicola (strain AU 1054) protein is Beta-ketoacyl-[acyl-carrier-protein] synthase III.